The chain runs to 333 residues: MASQNTEQEYEAKLAPSVGGEPTSGGPSGSSPDPNPDSSEVLDRHEDQAMSQDPGSQDNSPPEDRNQRVVNVEDNHNLFRLSFPRKLWTIVEEDTFKSVSWNDDGDAVIIDKDLFQREVLQRKGAERIFKTDNLTSFIRQLNLYGFCKTRPSNSPGNKKMMIYCNSNFQRDKPRLLENIQRKDALRNTAQQATRVPTPKRKNLVATRRSLRIYHINARKEAIKMCQQGAPSVQGPSGTQSFRRSGMWSKKSATRHPLGNGPPQEPNGPSWEGTSGNVTFTSSATTWMEGTGILSSLVYSDNGSVMSLYNICYYALLASLSVMSPNEPSDDEEE.

The disordered stretch occupies residues 1–66 (MASQNTEQEY…QDNSPPEDRN (66 aa)). Residues 29-39 (GSSPDPNPDSS) show a composition bias toward low complexity. The span at 49 to 60 (AMSQDPGSQDNS) shows a compositional bias: polar residues. Residues 79–182 (FRLSFPRKLW…PRLLENIQRK (104 aa)) mediate DNA binding. Residues 227-275 (QGAPSVQGPSGTQSFRRSGMWSKKSATRHPLGNGPPQEPNGPSWEGTSG) form a disordered region. The span at 228–242 (GAPSVQGPSGTQSFR) shows a compositional bias: polar residues.

The protein belongs to the HSF family.

The protein localises to the nucleus. The polypeptide is Heat shock transcription factor, X-linked member 4 (Homo sapiens (Human)).